A 470-amino-acid chain; its full sequence is Aminoacyl transferase sphA (470 aa).

The pyridoxal 5'-phosphate site is built by S212, H244, and T272. The residue at position 275 (K275) is an N6-(pyridoxal phosphate)lysine.

It belongs to the class-II pyridoxal-phosphate-dependent aminotransferase family. BioF subfamily. In terms of assembly, homodimer. Requires pyridoxal 5'-phosphate as cofactor.

It functions in the pathway secondary metabolite biosynthesis. Aminoacyl transferase; part of the gene cluster that mediates the biosynthesis of sphingofungins, bioactive molecules acting as sphingolipid inhibitors via inhibiting serine palmitoyl transferase (SPT). Within the pathway, sphA transfers 2-methyl-aminomalonate and 2-hydroxymethyl-aminomalonate onto the sphB product 3-hydroxyoctadeca-4,10-dienoyl-ACP to produce the precursors of sphingofungins E and F. The substrate specificity of sphA using 2-methyl-aminomalonate and 2-hydroxymethyl-aminomalonate instread of aminomalonate is responsible for the biosynthesis of sphingofungins E and F but not B and C like in Aspergillus fumigatus. The PKS sphB does not contain any putative thioesterase domain for releasing the nascent polyketide chain and it has been suggested that aminoacyl transferases can facilitate the polyketide chain release. The sequence is that of Aminoacyl transferase sphA from Byssochlamys spectabilis (Paecilomyces variotii).